A 404-amino-acid chain; its full sequence is Ubiquitin-like modifier-activating enzyme 5 (404 aa).

ATP contacts are provided by G83, D104, K127, N150, and N184. Positions 226 and 229 each coordinate Zn(2+). The active-site Glycyl thioester intermediate is the C250. Zn(2+)-binding residues include C303 and C308. The tract at residues 372 to 393 (APEKSSETSEETVTAATADETS) is disordered. The segment covering 382–391 (ETVTAATADE) has biased composition (low complexity).

The protein belongs to the ubiquitin-activating E1 family. UBA5 subfamily.

E1-like enzyme which activates UFM1. This is Ubiquitin-like modifier-activating enzyme 5 from Drosophila sechellia (Fruit fly).